Here is a 396-residue protein sequence, read N- to C-terminus: Phosphoglycerate kinase (396 aa).

Residues 21–23 (DFN), arginine 36, 59–62 (HFDR), arginine 118, and arginine 151 each bind substrate. Residues lysine 201, glutamate 323, and 353–356 (GGDT) contribute to the ATP site.

It belongs to the phosphoglycerate kinase family. In terms of assembly, monomer.

The protein resides in the cytoplasm. The enzyme catalyses (2R)-3-phosphoglycerate + ATP = (2R)-3-phospho-glyceroyl phosphate + ADP. It participates in carbohydrate degradation; glycolysis; pyruvate from D-glyceraldehyde 3-phosphate: step 2/5. The chain is Phosphoglycerate kinase from Caulobacter sp. (strain K31).